The chain runs to 286 residues: N-alpha-acetyltransferase 80 (286 aa).

Positions 33 to 54 (TFNPGPTELTLDPEHQPEETPA) are disordered. The N-acetyltransferase domain occupies 60–207 (LTLEPVHRRP…VFTSRRLPAT (148 aa)). Residues Arg-85 and 90-93 (RLHS) each bind substrate. Residues 141–143 (VVV), 149–154 (GRGFGR), and Gln-179 contribute to the acetyl-CoA site. A disordered region spans residues 212 to 269 (FPTAPSPRPPRKAPNLTAQAAPRGPKGPPLPPPPPLPECLTISPPVPSGPPSKSLLET). Pro residues predominate over residues 236-248 (PKGPPLPPPPPLP).

It belongs to the acetyltransferase family. Strongly expressed in heart and skeletal muscle, followed by brain and pancreas, with weak expression in kidney, liver, and lung and no expression in placenta.

The protein localises to the cytoplasm. It localises to the cytosol. It catalyses the reaction N-terminal L-aspartyl-L-aspartyl-L-aspartyl-[protein] + acetyl-CoA = N-terminal N-acetyl-L-aspartyl-L-aspartyl-L-aspartyl-[protein] + CoA + H(+). It carries out the reaction N-terminal L-glutamyl-L-glutamyl-L-glutamyl-[protein] + acetyl-CoA = N-terminal N-acetyl-L-glutamyl-L-glutamyl-L-glutamyl-[protein] + CoA + H(+). Its function is as follows. N-alpha-acetyltransferase that specifically mediates the acetylation of the acidic amino terminus of processed forms of beta- and gamma-actin (ACTB and ACTG, respectively). N-terminal acetylation of processed beta- and gamma-actin regulates actin filament depolymerization and elongation. In vivo, preferentially displays N-terminal acetyltransferase activity towards acid N-terminal sequences starting with Asp-Asp-Asp and Glu-Glu-Glu. In vitro, shows high activity towards Met-Asp-Glu-Leu and Met-Asp-Asp-Asp. May act as a tumor suppressor. This is N-alpha-acetyltransferase 80 from Homo sapiens (Human).